Here is a 1382-residue protein sequence, read N- to C-terminus: Hepatocyte growth factor receptor (1382 aa).

Residues 1–24 form the signal peptide; sequence MKASAVLAPGILALLFTLVQGSDG. Topologically, residues 25 to 935 are extracellular; it reads ECHEALAKSE…VQPDQNFTGL (911 aa). The Sema domain occupies 27-516; it reads HEALAKSEMN…TGKRITKIPL (490 aa). N45, N100, and N106 each carry an N-linked (GlcNAc...) asparagine glycan. Intrachain disulfides connect C95–C101, C98–C160, C133–C141, and C173–C176. N-linked (GlcNAc...) asparagine glycosylation is found at N203 and N359. 2 disulfide bridges follow: C299-C364 and C386-C398. N400 and N406 each carry an N-linked (GlcNAc...) asparagine glycan. Cystine bridges form between C521–C539, C527–C562, C530–C546, and C542–C552. IPT/TIG domains lie at 564–656, 658–740, and 743–837; these read PAIH…FSYV, PVIT…FSYQ, and PVVY…LIYV. O-linked (Man) threonine glycosylation is present at T583. 2 N-linked (GlcNAc...) asparagine glycosylation sites follow: N608 and N636. O-linked (Man) threonine glycosylation is found at T677 and T762. N786, N880, and N931 each carry an N-linked (GlcNAc...) asparagine glycan. The helical transmembrane segment at 936 to 956 threads the bilayer; that stretch reads IVGVVSISIILLLLLGLFLWM. The Cytoplasmic portion of the chain corresponds to 957–1382; it reads KKRKQIKDLG…QDNINGEVDT (426 aa). S967 carries the post-translational modification Phosphoserine. At T978 the chain carries Phosphothreonine. Phosphoserine is present on residues S991, S998, and S1001. Y1004 is modified (phosphotyrosine). Residues 1079–1346 enclose the Protein kinase domain; it reads VHFNEVIGRG…RISAIFSTFI (268 aa). ATP contacts are provided by residues 1085-1093 and K1111; that span reads IGRGHFGCV. D1205 acts as the Proton acceptor in catalysis. Residues 1213-1382 are interaction with RANBP9; it reads LDEKFTVKVA…QDNINGEVDT (170 aa). A Phosphotyrosine modification is found at Y1231. A phosphotyrosine; by autocatalysis mark is found at Y1235 and Y1236. T1290 is subject to Phosphothreonine. The tract at residues 1321 to 1360 is interaction with MUC20; that stretch reads WHPKAEMRPSFSELVSRISAIFSTFIGEHYVHVNATYVNV. A phosphotyrosine; by autocatalysis mark is found at Y1350 and Y1357. Y1366 carries the phosphotyrosine modification.

The protein belongs to the protein kinase superfamily. Tyr protein kinase family. In terms of assembly, heterodimer made of an alpha chain (50 kDa) and a beta chain (145 kDa) which are disulfide linked. Binds PLXNB1. Interacts when phosphorylated with downstream effectors including STAT3, PIK3R1, SRC, PCLG1, GRB2 and GAB1. Interacts with SPSB1, SPSB2 and SPSB4. Interacts with INPP5D/SHIP1. When phosphorylated at Tyr-1357, interacts with INPPL1/SHIP2. Interacts with RANBP9 and RANBP10, as well as SPSB1, SPSB2, SPSB3 and SPSB4. SPSB1 binding occurs in the presence and in the absence of HGF, however HGF treatment has a positive effect on this interaction. Interacts with MUC20; prevents interaction with GRB2 and suppresses hepatocyte growth factor-induced cell proliferation. Interacts with GRB10. Interacts with PTPN1 and PTPN2. Interacts with HSP90AA1 and HSP90AB1; the interaction suppresses MET kinase activity. Interacts with tensin TNS3. Interacts (when phosphorylated) with tensin TNS4 (via SH2 domain); the interaction increases MET protein stability by inhibiting MET endocytosis and subsequent lysosomal degradation. In terms of processing, autophosphorylated in response to ligand binding on Tyr-1235 and Tyr-1236 in the kinase domain leading to further phosphorylation of Tyr-1350 and Tyr-1357 in the C-terminal multifunctional docking site. Dephosphorylated by PTPRJ at Tyr-1350 and Tyr-1366. Dephosphorylated by PTPN1 and PTPN2. Ubiquitinated. Ubiquitination by CBL regulates the receptor stability and activity through proteasomal degradation. Post-translationally, O-mannosylation of IPT/TIG domains by TMEM260 is required for protein maturation. O-mannosylated residues are composed of single mannose glycans that are not elongated or modified.

Its subcellular location is the membrane. It catalyses the reaction L-tyrosyl-[protein] + ATP = O-phospho-L-tyrosyl-[protein] + ADP + H(+). With respect to regulation, in its inactive state, the C-terminal tail interacts with the catalytic domain and inhibits the kinase activity. Upon ligand binding, the C-terminal tail is displaced and becomes phosphorylated, thus increasing the kinase activity. Its function is as follows. Receptor tyrosine kinase that transduces signals from the extracellular matrix into the cytoplasm by binding to hepatocyte growth factor/HGF ligand. Regulates many physiological processes including proliferation, scattering, morphogenesis and survival. Ligand binding at the cell surface induces autophosphorylation of MET on its intracellular domain that provides docking sites for downstream signaling molecules. Following activation by ligand, interacts with the PI3-kinase subunit PIK3R1, PLCG1, SRC, GRB2, STAT3 or the adapter GAB1. Recruitment of these downstream effectors by MET leads to the activation of several signaling cascades including the RAS-ERK, PI3 kinase-AKT, or PLCgamma-PKC. The RAS-ERK activation is associated with the morphogenetic effects while PI3K/AKT coordinates prosurvival effects. During embryonic development, MET signaling plays a role in gastrulation, development and migration of muscles and neuronal precursors, angiogenesis and kidney formation. In adults, participates in wound healing as well as organ regeneration and tissue remodeling. Also promotes differentiation and proliferation of hematopoietic cells. The sequence is that of Hepatocyte growth factor receptor (MET) from Microcebus murinus (Gray mouse lemur).